We begin with the raw amino-acid sequence, 912 residues long: Non-lysosomal glucosylceramidase (912 aa).

A disordered region spans residues 886–912 (HKKNSSRPAVTQGTAPSQPECGPKRSL). The segment covering 891–902 (SRPAVTQGTAPS) has biased composition (polar residues).

Belongs to the non-lysosomal glucosylceramidase family.

It localises to the endoplasmic reticulum membrane. The protein localises to the golgi apparatus membrane. The catalysed reaction is a beta-D-glucosyl-(1&lt;-&gt;1')-N-acylsphing-4-enine + H2O = an N-acylsphing-4-enine + D-glucose. It carries out the reaction a beta-D-galactosyl-(1&lt;-&gt;1')-N-acylsphing-4-enine + H2O = an N-acylsphing-4-enine + D-galactose. It catalyses the reaction beta-D-glucosyl-(1-&gt;3)-O-lithocholate + H2O = lithocholate + D-glucose. The enzyme catalyses beta-D-glucosyl-(1-&gt;3)-O-chenodeoxycholate + H2O = chenodeoxycholate + D-glucose. The catalysed reaction is a di-trans,poly-cis-dolichyl beta-D-glucosyl phosphate + chenodeoxycholate = beta-D-glucosyl-(1-&gt;3)-O-chenodeoxycholate + a di-trans,poly-cis-dolichyl phosphate + H(+). It carries out the reaction octyl beta-D-glucose + chenodeoxycholate = beta-D-glucosyl-(1-&gt;3)-O-chenodeoxycholate + octan-1-ol. It catalyses the reaction cholesteryl 3-beta-D-glucoside + H2O = cholesterol + D-glucose. The enzyme catalyses a beta-D-glucosyl-(1&lt;-&gt;1')-N-acylsphing-4-enine + cholesterol = cholesteryl 3-beta-D-glucoside + an N-acylsphing-4-enine. The catalysed reaction is beta-D-glucosyl-N-(9Z-octadecenoyl)-sphing-4E-enine + cholesterol = N-(9Z-octadecenoyl)-sphing-4-enine + cholesteryl 3-beta-D-glucoside. It carries out the reaction a beta-D-galactosyl-(1&lt;-&gt;1')-N-acylsphing-4-enine + cholesterol = cholesteryl 3-beta-D-galactoside + an N-acylsphing-4-enine. It catalyses the reaction 1-(beta-D-galactosyl)-N-dodecanoylsphing-4-enine + cholesterol = cholesteryl 3-beta-D-galactoside + N-dodecanoylsphing-4-enine. It participates in lipid metabolism; sphingolipid metabolism. The protein operates within steroid metabolism; cholesterol metabolism. Enzymatic activity is dependent on membrane association and requires the presence of lipids. Non-lysosomal glucosylceramidase that catalyzes the hydrolysis of glucosylceramides/GlcCers (such as beta-D-glucosyl-(1&lt;-&gt;1')-N-acylsphing-4-enine) to free glucose and ceramides (such as N-acylsphing-4-enine). GlcCers are membrane glycosphingolipids that have a wide intracellular distribution. They are the main precursors of more complex glycosphingolipids that play a role in cellular growth, differentiation, adhesion, signaling, cytoskeletal dynamics and membrane properties. Involved in the transglucosylation of cholesterol, transfers glucose from GlcCer to cholesterol, thereby modifying its water solubility and biological properties. Under specific conditions, may catalyze the reverse reaction, transferring glucose from cholesteryl-3-beta-D-glucoside to ceramide (such as N-acylsphing-4-enine). May play a role in the metabolism of bile acids. Able to hydrolyze bile acid 3-O-glucosides as well as to produce bile acid-glucose conjugates thanks to a bile acid glucosyl transferase activity. Catalyzes the hydrolysis of galactosylceramides/GalCers (such as beta-D-galactosyl-(1&lt;-&gt;1')-N-acylsphing-4-enine), as well as the galactosyl transfer between GalCers and cholesterol in vitro with lower activity compared with their activity against GlcCers. The sequence is that of Non-lysosomal glucosylceramidase from Rattus norvegicus (Rat).